Here is a 132-residue protein sequence, read N- to C-terminus: Small ribosomal subunit protein uS8 (132 aa).

This sequence belongs to the universal ribosomal protein uS8 family. Part of the 30S ribosomal subunit. Contacts proteins S5 and S12.

In terms of biological role, one of the primary rRNA binding proteins, it binds directly to 16S rRNA central domain where it helps coordinate assembly of the platform of the 30S subunit. The sequence is that of Small ribosomal subunit protein uS8 from Sinorhizobium medicae (strain WSM419) (Ensifer medicae).